The primary structure comprises 120 residues: Large ribosomal subunit protein bL19c (120 aa).

This sequence belongs to the bacterial ribosomal protein bL19 family.

The protein resides in the plastid. Its subcellular location is the chloroplast. The polypeptide is Large ribosomal subunit protein bL19c (rpl19) (Trieres chinensis (Marine centric diatom)).